A 213-amino-acid polypeptide reads, in one-letter code: THAP domain-containing protein 1 (213 aa).

Residues 1–81 form a THAP-type zinc finger; sequence MVQSCSAYGC…LKENAVPTIF (81 aa). Positions 134-137 match the HCFC1-binding motif (HBM) motif; the sequence is DHNY. An involved in homodimer formation region spans residues 139–185; sequence VEDTMHQRKRIHQLEQQVEKLRKKLKTAQQRCRRQERQLEKLKEVVH. A coiled-coil region spans residues 139 to 190; that stretch reads VEDTMHQRKRIHQLEQQVEKLRKKLKTAQQRCRRQERQLEKLKEVVHFQKEK.

It belongs to the THAP1 family. Homodimer. Interacts with PAWR. Component of a THAP1/THAP3-HCFC1-OGT complex that contains, either THAP1 or THAP3, HCFC1 and OGT. Interacts with OGT. Interacts (via the HBM) with HCFC1 (via the Kelch-repeat domain); the interaction recruits HCFC1 to the RRM1 promoter. In terms of tissue distribution, highly expressed in heart, skeletal muscle, kidney and liver. Weaker expression in brain and placenta.

The protein resides in the nucleus. The protein localises to the nucleoplasm. It is found in the PML body. Functionally, DNA-binding transcription regulator that regulates endothelial cell proliferation and G1/S cell-cycle progression. Specifically binds the 5'-[AT]NTNN[GT]GGCA[AGT]-3' core DNA sequence and acts by modulating expression of pRB-E2F cell-cycle target genes, including RRM1. Component of a THAP1/THAP3-HCFC1-OGT complex that is required for the regulation of the transcriptional activity of RRM1. May also have pro-apoptotic activity by potentiating both serum-withdrawal and TNF-induced apoptosis. The sequence is that of THAP domain-containing protein 1 (THAP1) from Homo sapiens (Human).